The primary structure comprises 218 residues: 1-Cys peroxiredoxin (218 aa).

Positions 4 to 164 (LTIGDTIPDL…VLRVVESLQK (161 aa)) constitute a Thioredoxin domain. C46 (cysteine sulfenic acid (-SOH) intermediate) is an active-site residue. Residues 194–217 (KEMFPQGFKTADLPSKKEYLRFTN) carry the Bipartite nuclear localization signal motif.

The protein belongs to the peroxiredoxin family. Prx6 subfamily.

It localises to the nucleus. Its subcellular location is the cytoplasm. The enzyme catalyses a hydroperoxide + [thioredoxin]-dithiol = an alcohol + [thioredoxin]-disulfide + H2O. Its function is as follows. Thiol-specific peroxidase that catalyzes the reduction of hydrogen peroxide and organic hydroperoxides to water and alcohols, respectively. Seems to contribute to the inhibition of germination during stress. The chain is 1-Cys peroxiredoxin from Medicago truncatula (Barrel medic).